Here is a 576-residue protein sequence, read N- to C-terminus: MAENNEKYRSFRLACDRCRSHKLKCPQQPSTATGACQRCTRAKAQCTFSPRSRAIKNTQDGGSIRGKAIKKPAKRGGSQSPSAPGSPPPTATENPPQQQQSDQQKPSGSNRWDSPWGPLGTFDVLYPTPQAAFPAAAEVSPSDFSAAMSMGSTFMDCSPFAETSSGFDFQFDMDHPSGLPYYNNSTDPSLAVQSGGTEDDDVPMASTVDNSRCHEKEDCTKKLSCLAVEFQRHLALFNKHSTSHGGADKKGARTGSDGEEAQHWLSTYPIGEILCLSGDFSSILEPELYPHGRAAPVSIDETTNDARGPVVPVGQRDGHHANLSDSGTTIGLEVAHAGHPPPPHLSHHRHCQPSPPGSLPTPTSRSSTAAVMDTPTALLILNCYVSMIRIYSALFAHLHAHLRHPAPSHSSARHRHSRSTLHRRYSSGIPDPALKFGELPPAPSDDVSLRAYTAVRLLLDALQRSEELLGLPADLRCASVSGAPVGARDDDGDDDEEEEEEDTAAAILSSDSEAESLGSSVCVLPGGCGEIIGAELARAVFRQEAQMGSEQGGGGLEVLRRNIAGVKRSLRQRMAL.

The zn(2)-C6 fungal-type DNA-binding region spans 15-46 (CDRCRSHKLKCPQQPSTATGACQRCTRAKAQC). The span at 47–61 (TFSPRSRAIKNTQDG) shows a compositional bias: polar residues. 3 disordered regions span residues 47-123 (TFSP…GTFD), 334-369 (VAHAGHPPPPHLSHHRHCQPSPPGSLPTPTSRSSTA), and 404-424 (HPAPSHSSARHRHSRSTLHRR). Over residues 95–109 (PPQQQQSDQQKPSGS) the composition is skewed to low complexity.

The protein localises to the nucleus. Functionally, transcription factor; part of the gene cluster that mediates the biosynthesis of macrophasetins, 3-decalinoyltetramic acids (DTAs) which feature a tetramate (pyrrolidine-2,4-dione) unit connected to a decalin fragment and that have potent bioactivities. This chain is Zn(2)-C6 fungal-type transcription factor mpsE, found in Macrophomina phaseolina (strain MS6) (Charcoal rot fungus).